The sequence spans 278 residues: HTH-type transcriptional activator RhaS (278 aa).

The region spanning N174–G272 is the HTH araC/xylS-type domain. 2 DNA-binding regions (H-T-H motif) span residues E191–T212 and V239–F262.

In terms of assembly, binds DNA as a dimer.

Its subcellular location is the cytoplasm. Functionally, activates expression of the rhaBAD and rhaT operons. In Salmonella schwarzengrund (strain CVM19633), this protein is HTH-type transcriptional activator RhaS.